The sequence spans 695 residues: Variediene synthase (695 aa).

A disordered region spans residues 1-23; that stretch reads MVPTSLSPDDTSDPVPRSSSDIQ. A terpene cyclase region spans residues 7–332; sequence SPDDTSDPVP…PRYHPWLCEE (326 aa). D98 is a binding site for Mg(2+). Substrate-binding positions include D98, 184-187, N228, 232-236, and 324-325; these read RIID, SFDIE, and RY. The DDXXD 1 motif lies at 98 to 102; sequence DNVVE. The NSE/DTE signature appears at 228–236; the sequence is NDYFSFDIE. The disordered stretch occupies residues 353-392; that stretch reads RRSISGDSISSESSVWSGASDRSARSSVSSAPSLDEGKEP. Positions 357–385 are enriched in low complexity; the sequence is SGDSISSESSVWSGASDRSARSSVSSAPS. Isopentenyl diphosphate contacts are provided by K415, R418, and H447. Residues D454 and D458 each coordinate Mg(2+). The short motif at 454–458 is the DDXXD 2 element; that stretch reads DDIED. Residue R463 participates in dimethylallyl diphosphate binding. R464 contacts isopentenyl diphosphate. Dimethylallyl diphosphate contacts are provided by K541, T542, Q579, N586, K595, and K605.

It in the N-terminal section; belongs to the terpene synthase family. This sequence in the C-terminal section; belongs to the FPP/GGPP synthase family. As to quaternary structure, hexamer. Requires Mg(2+) as cofactor.

It carries out the reaction isopentenyl diphosphate + (2E,6E)-farnesyl diphosphate = (2E,6E,10E)-geranylgeranyl diphosphate + diphosphate. It catalyses the reaction (2E,6E,10E)-geranylgeranyl diphosphate = variediene + diphosphate. It functions in the pathway secondary metabolite biosynthesis; terpenoid biosynthesis. In terms of biological role, bifunctional terpene synthase converts DMAPP and IPP, and also GGPP, into variediene as a single product. The C-terminal prenyltransferase domain of AbVS catalyzes formation of GGPP, whereas the N-terminal terpene cyclase domain catalyzes the cyclization of GGPP to variediene. The chain is Variediene synthase from Aspergillus brasiliensis (strain CBS 101740 / IMI 381727 / IBT 21946).